The following is a 917-amino-acid chain: Protein translocase subunit SecA (917 aa).

Residues Gln-87, 105–109 (GEGKT), and Asp-501 contribute to the ATP site. Zn(2+) contacts are provided by Cys-901, Cys-903, Cys-912, and His-913.

The protein belongs to the SecA family. As to quaternary structure, monomer and homodimer. Part of the essential Sec protein translocation apparatus which comprises SecA, SecYEG and auxiliary proteins SecDF-YajC and YidC. Zn(2+) is required as a cofactor.

The protein localises to the cell inner membrane. The protein resides in the cytoplasm. It catalyses the reaction ATP + H2O + cellular proteinSide 1 = ADP + phosphate + cellular proteinSide 2.. In terms of biological role, part of the Sec protein translocase complex. Interacts with the SecYEG preprotein conducting channel. Has a central role in coupling the hydrolysis of ATP to the transfer of proteins into and across the cell membrane, serving both as a receptor for the preprotein-SecB complex and as an ATP-driven molecular motor driving the stepwise translocation of polypeptide chains across the membrane. The polypeptide is Protein translocase subunit SecA (Granulibacter bethesdensis (strain ATCC BAA-1260 / CGDNIH1)).